A 214-amino-acid chain; its full sequence is MNQSILSPFGQSEERAIAAINAFKQGNGVLVLDDEDRENEGDLIFPAETITVEQMTMLIRYGSGIVCLCLSDEICQQLDLPPMVTENTSVNKTAFTVTIEAAKGVSTGVSATDRVTTIRAAVADNAKPSDLSRPGHIFPLRAMTGGVLKRRGHTEASVDLARLAGYKAAGVICEITNDDGSMARAPEIVTFAQKFGFPVVTIEDLVAYRQKYDV.

Residues 37 to 38 (RE), Asp42, 150 to 154 (RRGHT), and Glu174 contribute to the D-ribulose 5-phosphate site. Glu38 is a Mg(2+) binding site. His153 is a Mg(2+) binding site.

Belongs to the DHBP synthase family. In terms of assembly, homodimer. The cofactor is Mg(2+). Requires Mn(2+) as cofactor.

The enzyme catalyses D-ribulose 5-phosphate = (2S)-2-hydroxy-3-oxobutyl phosphate + formate + H(+). The protein operates within cofactor biosynthesis; riboflavin biosynthesis; 2-hydroxy-3-oxobutyl phosphate from D-ribulose 5-phosphate: step 1/1. Its function is as follows. Catalyzes the conversion of D-ribulose 5-phosphate to formate and 3,4-dihydroxy-2-butanone 4-phosphate. The chain is 3,4-dihydroxy-2-butanone 4-phosphate synthase from Pasteurella multocida (strain Pm70).